Consider the following 154-residue polypeptide: Superoxide dismutase [Cu-Zn] (154 aa).

H47, H49, and H64 together coordinate Cu cation. C58 and C147 form a disulfide bridge. The segment at 62 to 89 (GPHFNPFKKNHGGPTDSERHVGDLGNVK) is disordered. Zn(2+) is bound by residues H64, H72, H81, and D84. Position 121 (H121) interacts with Cu cation. R144 contacts substrate.

It belongs to the Cu-Zn superoxide dismutase family. In terms of assembly, homodimer. Cu cation serves as cofactor. Zn(2+) is required as a cofactor.

It is found in the cytoplasm. The catalysed reaction is 2 superoxide + 2 H(+) = H2O2 + O2. Functionally, destroys radicals which are normally produced within the cells and which are toxic to biological systems. The protein is Superoxide dismutase [Cu-Zn] (SOD1) of Yarrowia lipolytica (strain CLIB 122 / E 150) (Yeast).